We begin with the raw amino-acid sequence, 312 residues long: Putative tricarboxylate transport protein, mitochondrial (312 aa).

3 Solcar repeats span residues 23-111, 122-208, and 218-303; these read EKTV…LKSQ, VMRL…LKDW, and ISKP…IIEF. 6 consecutive transmembrane segments (helical) span residues 29–49, 75–95, 126–146, 164–184, 221–241, and 286–306; these read IVIG…TEYV, VNGH…YGSI, LCGL…METV, FVHG…YKGV, PIVG…NTPI, and VCLD…FLDV.

This sequence belongs to the mitochondrial carrier (TC 2.A.29) family.

The protein localises to the mitochondrion inner membrane. In terms of biological role, transport of citrate across inner mitochondrial membrane. In Caenorhabditis elegans, this protein is Putative tricarboxylate transport protein, mitochondrial.